Here is a 364-residue protein sequence, read N- to C-terminus: Mannose-1-phosphate guanyltransferase (364 aa).

This sequence belongs to the transferase hexapeptide repeat family.

The protein resides in the cytoplasm. The enzyme catalyses alpha-D-mannose 1-phosphate + GTP + H(+) = GDP-alpha-D-mannose + diphosphate. It functions in the pathway nucleotide-sugar biosynthesis; GDP-alpha-D-mannose biosynthesis; GDP-alpha-D-mannose from alpha-D-mannose 1-phosphate (GTP route): step 1/1. Involved in cell wall synthesis where it is required for glycosylation. Involved in cell cycle progression through cell-size checkpoint. This chain is Mannose-1-phosphate guanyltransferase (mpg1), found in Hypocrea jecorina (Trichoderma reesei).